A 121-amino-acid polypeptide reads, in one-letter code: uncharacterized protein (121 aa).

A helical membrane pass occupies residues 9–29; the sequence is LTILIASIYIIFFVNAAPTLY. A disordered region spans residues 91 to 121; it reads EELPTYPPTMTTPLETTPLDTSPPVLPSAIP. Low complexity predominate over residues 98–113; it reads PTMTTPLETTPLDTSP.

The protein resides in the host membrane. This is an uncharacterized protein from Alcelaphine herpesvirus 1 (strain C500) (AlHV-1).